Here is a 127-residue protein sequence, read N- to C-terminus: RxLR effector protein SFI3 (127 aa).

A signal peptide spans 1–20 (MRFLLVAVVAMMALVSSSTA). The RxLR-dEER motif lies at 40 to 62 (RSLRNTEERSIAAILAEAGEEDR). Positions 72 to 107 (WYKAKLTPTQVKTVLGVSQAEMNNVAKQLQRLYLGY) are WY-domain.

Belongs to the RxLR effector family. Forms an unusual trans-homodimer. Interacts with host UBK.

Its subcellular location is the secreted. It localises to the host nucleus. The protein localises to the host nucleolus. Effector that suppresses flg22-induced post-translational MAP kinase activation in potato and tomato, but not in Arabidopsis. The perception of highly conserved pathogen- or microbe-associated molecular patterns (PAMPs/MAMPs), such as flg22, triggers converging signaling pathways recruiting MAP kinase cascades and inducing transcriptional re-programming, yielding a generic antimicrobial response. Does not suppress programmed cell death triggered by the P.infestans elicitin infestin-1 (INF1), or by co-expression of tomato Cf4 with Cladosporium fulvum Avr4. Suppresses early pattern-triggered immunity (PTI) via interaction with the U-box-kinase protein UBK, a positive regulator of specific PTI pathways in both potato and Nicotiana benthamiana. The sequence is that of RxLR effector protein SFI3 from Phytophthora infestans (strain T30-4) (Potato late blight agent).